Reading from the N-terminus, the 89-residue chain is Large ribosomal subunit protein eL34 (89 aa).

Residues 41-69 (RPLNGVPRGRPSELRKLPKTAKRPERPYP) form a disordered region. Over residues 50–66 (RPSELRKLPKTAKRPER) the composition is skewed to basic and acidic residues.

This sequence belongs to the eukaryotic ribosomal protein eL34 family.

The sequence is that of Large ribosomal subunit protein eL34 from Thermococcus gammatolerans (strain DSM 15229 / JCM 11827 / EJ3).